The following is a 341-amino-acid chain: Protein FAM50A (341 aa).

2 disordered regions span residues 1-27 and 80-147; these read MAQYKGAASEAGRAMQLMKKREREREQ and LVKE…EIEE. The segment covering 80-115 has biased composition (basic and acidic residues); it reads LVKEREKQLAKKEQSKELQLKLEKQKEKKRKEEQKR. The segment covering 125 to 147 has biased composition (acidic residues); sequence DEGEDEEEEEEEEEEEEEDEIEE.

It belongs to the FAM50 family.

The protein resides in the nucleus. Probably involved in the regulation of pre-mRNA splicing. This Danio rerio (Zebrafish) protein is Protein FAM50A (fam50a).